A 413-amino-acid polypeptide reads, in one-letter code: Alpha-1-antitrypsin 1-4 (413 aa).

Residues 1–24 (MTPSISWSLLLLAGLCCLVPSFLA) form the signal peptide. N-linked (GlcNAc...) asparagine glycans are attached at residues N64, N101, and N265. The tract at residues 368-387 (AATVLQVATYSMPPIVRFDH) is RCL.

The protein belongs to the serpin family.

The protein resides in the secreted. In terms of biological role, inhibitor of serine proteases. Can inhibit trypsin and chymotrypsin; relatively ineffective against elastase. This Mus musculus (Mouse) protein is Alpha-1-antitrypsin 1-4 (Serpina1d).